The following is a 110-amino-acid chain: V-type proton ATPase subunit F (110 aa).

It belongs to the V-ATPase F subunit family. In terms of assembly, V-ATPase is a heteromultimeric enzyme made up of two complexes: the ATP-hydrolytic V1 complex and the proton translocation V0 complex. The V1 complex consists of three catalytic AB heterodimers that form a heterohexamer, three peripheral stalks each consisting of EG heterodimers, one central rotor including subunits D and F, and the regulatory subunits C and H. The proton translocation complex V0 consists of the proton transport subunit a, a ring of proteolipid subunits c9c'', rotary subunit d, subunits e and f, and two accessory subunits.

Its function is as follows. Subunit of the V1 complex of vacuolar(H+)-ATPase (V-ATPase), a multisubunit enzyme composed of a peripheral complex (V1) that hydrolyzes ATP and a membrane integral complex (V0) that translocates protons. V-ATPase is responsible for acidifying and maintaining the pH of intracellular compartments and in some cell types, is targeted to the plasma membrane, where it is responsible for acidifying the extracellular environment. The polypeptide is V-type proton ATPase subunit F (atp6s14) (Xenopus laevis (African clawed frog)).